Consider the following 160-residue polypeptide: SsrA-binding protein (160 aa).

Positions K136–D160 are disordered.

Belongs to the SmpB family.

Its subcellular location is the cytoplasm. Functionally, required for rescue of stalled ribosomes mediated by trans-translation. Binds to transfer-messenger RNA (tmRNA), required for stable association of tmRNA with ribosomes. tmRNA and SmpB together mimic tRNA shape, replacing the anticodon stem-loop with SmpB. tmRNA is encoded by the ssrA gene; the 2 termini fold to resemble tRNA(Ala) and it encodes a 'tag peptide', a short internal open reading frame. During trans-translation Ala-aminoacylated tmRNA acts like a tRNA, entering the A-site of stalled ribosomes, displacing the stalled mRNA. The ribosome then switches to translate the ORF on the tmRNA; the nascent peptide is terminated with the 'tag peptide' encoded by the tmRNA and targeted for degradation. The ribosome is freed to recommence translation, which seems to be the essential function of trans-translation. This chain is SsrA-binding protein, found in Pseudomonas putida (strain GB-1).